We begin with the raw amino-acid sequence, 376 residues long: Phytanoyl-CoA hydroxylase interacting protein-like (376 aa).

2 positions are modified to phosphoserine: serine 12 and serine 15. N-linked (GlcNAc...) asparagine glycosylation occurs at asparagine 23. Residue serine 25 is modified to Phosphoserine. Residue asparagine 37 is glycosylated (N-linked (GlcNAc...) asparagine). One can recognise a Fibronectin type-III domain in the interval 52–161 (VPRNIKISNI…EIIEFCTADY (110 aa)).

The protein belongs to the PHYHIP family.

May play a role in the development of the central system. The sequence is that of Phytanoyl-CoA hydroxylase interacting protein-like (PHYHIPL) from Bos taurus (Bovine).